The primary structure comprises 207 residues: PITH domain-containing protein P35G2.02 (207 aa).

The 177-residue stretch at 13 to 189 folds into the PITH domain; the sequence is EHPFESGPND…PVVTIYEATP (177 aa).

This sequence belongs to the PITHD1 family.

The protein localises to the cytoplasm. It localises to the nucleus. This chain is PITH domain-containing protein P35G2.02, found in Schizosaccharomyces pombe (strain 972 / ATCC 24843) (Fission yeast).